A 400-amino-acid chain; its full sequence is Probable tRNA pseudouridine synthase D (400 aa).

Asp-89 (nucleophile) is an active-site residue. The TRUD domain maps to 162–357 (GVPNYYGLQR…AGGDRKPALL (196 aa)).

The protein belongs to the pseudouridine synthase TruD family.

The catalysed reaction is uridine(13) in tRNA = pseudouridine(13) in tRNA. In terms of biological role, could be responsible for synthesis of pseudouridine from uracil-13 in transfer RNAs. The sequence is that of Probable tRNA pseudouridine synthase D from Methanopyrus kandleri (strain AV19 / DSM 6324 / JCM 9639 / NBRC 100938).